The chain runs to 528 residues: Na(+)/H(+) antiporter NhaB (528 aa).

The next 11 helical transmembrane spans lie at 23–43, 45–65, 90–110, 136–156, 204–224, 242–262, 305–325, 350–370, 392–412, 450–470, and 479–499; these read VAII…DPFV, GWLL…CYPL, LVAN…IYFM, CFAA…AVVI, LLMH…VGEP, IRMA…CAIV, GLIA…VGLI, EEAL…AVII, LALF…VFVG, ATPN…APLI, and IMAL…IMFF.

The protein belongs to the NhaB Na(+)/H(+) (TC 2.A.34) antiporter family.

The protein localises to the cell inner membrane. It catalyses the reaction 2 Na(+)(in) + 3 H(+)(out) = 2 Na(+)(out) + 3 H(+)(in). Na(+)/H(+) antiporter that extrudes sodium in exchange for external protons. This is Na(+)/H(+) antiporter NhaB from Vibrio campbellii (strain ATCC BAA-1116).